Here is a 353-residue protein sequence, read N- to C-terminus: Protein XRP2 (353 aa).

The interval 1–37 is disordered; sequence MGCFFSKKAKRKRNSEEEQPQQDGEEPKQYSWDKREK. G2 is lipidated: N-myristoyl glycine. C3 carries S-palmitoyl cysteine lipidation. The segment covering 25–37 has biased composition (basic and acidic residues); that stretch reads EEPKQYSWDKREK. A C-CAP/cofactor C-like domain is found at 27-182; the sequence is PKQYSWDKRE…TWSNIHDFTP (156 aa). GTP-binding positions include 101–102 and 118–121; these read GS and QQFR.

Belongs to the TBCC family. Myristoylated on Gly-2; which may be required for membrane targeting. Post-translationally, palmitoylated on Cys-3; which may be required for plasma membrane targeting.

The protein resides in the cell membrane. In terms of biological role, acts as a GTPase-activating protein (GAP) for tubulin in concert with tubulin-specific chaperone C, but does not enhance tubulin heterodimerization. Acts as a GTPase-activating protein. May act as guanine nucleotide dissociation inhibitor towards ADP-ribosylation factor-like proteins. In Xenopus laevis (African clawed frog), this protein is Protein XRP2 (rp2).